Consider the following 196-residue polypeptide: dTTP/UTP pyrophosphatase (196 aa).

The active-site Proton acceptor is Asp72.

This sequence belongs to the Maf family. YhdE subfamily. The cofactor is a divalent metal cation.

Its subcellular location is the cytoplasm. The catalysed reaction is dTTP + H2O = dTMP + diphosphate + H(+). It carries out the reaction UTP + H2O = UMP + diphosphate + H(+). Its function is as follows. Nucleoside triphosphate pyrophosphatase that hydrolyzes dTTP and UTP. May have a dual role in cell division arrest and in preventing the incorporation of modified nucleotides into cellular nucleic acids. The polypeptide is dTTP/UTP pyrophosphatase (Chlamydia felis (strain Fe/C-56) (Chlamydophila felis)).